The sequence spans 465 residues: Ribulose bisphosphate carboxylase large chain (465 aa).

Position 4 is an N6,N6,N6-trimethyllysine (Lys-4). Substrate is bound by residues Asn-113 and Thr-163. The active-site Proton acceptor is Lys-165. Lys-167 serves as a coordination point for substrate. The Mg(2+) site is built by Lys-191, Asp-193, and Glu-194. Lys-191 bears the N6-carboxylysine mark. His-284 acts as the Proton acceptor in catalysis. Residues Arg-285, His-317, and Ser-369 each coordinate substrate.

This sequence belongs to the RuBisCO large chain family. Type I subfamily. Heterohexadecamer of 8 large chains and 8 small chains; disulfide-linked. The disulfide link is formed within the large subunit homodimers. It depends on Mg(2+) as a cofactor. The disulfide bond which can form in the large chain dimeric partners within the hexadecamer appears to be associated with oxidative stress and protein turnover.

The protein localises to the plastid. It localises to the chloroplast. The enzyme catalyses 2 (2R)-3-phosphoglycerate + 2 H(+) = D-ribulose 1,5-bisphosphate + CO2 + H2O. It catalyses the reaction D-ribulose 1,5-bisphosphate + O2 = 2-phosphoglycolate + (2R)-3-phosphoglycerate + 2 H(+). In terms of biological role, ruBisCO catalyzes two reactions: the carboxylation of D-ribulose 1,5-bisphosphate, the primary event in carbon dioxide fixation, as well as the oxidative fragmentation of the pentose substrate in the photorespiration process. Both reactions occur simultaneously and in competition at the same active site. In Combretum indicum (Rangoon creeper), this protein is Ribulose bisphosphate carboxylase large chain.